The sequence spans 72 residues: Small ribosomal subunit protein bS18c (72 aa).

It belongs to the bacterial ribosomal protein bS18 family. As to quaternary structure, part of the 30S ribosomal subunit.

Its subcellular location is the plastid. It localises to the chloroplast. The polypeptide is Small ribosomal subunit protein bS18c (Thalassiosira pseudonana (Marine diatom)).